The sequence spans 598 residues: Inactive metallocarboxypeptidase ECM14 (598 aa).

The signal sequence occupies residues 1 to 21; the sequence is MRLFTHGQVLALLAFVNTISA. The propeptide occupies 22 to 174; sequence IPSFSTNSYP…QTIYESYPSP (153 aa). One can recognise a Peptidase M14 domain in the interval 202-522; it reads NYQPLSVIVP…NAVMMLGRFL (321 aa). Positions 264 and 267 each coordinate Zn(2+). Residues 264-267, Arg322, and 339-340 each bind substrate; these read HARE and DR. Cysteines 333 and 356 form a disulfide. Asn349 carries N-linked (GlcNAc...) asparagine glycosylation. His396 serves as a coordination point for Zn(2+). 397-398 contributes to the substrate binding site; the sequence is SY. The segment at 539–598 is disordered; the sequence is QRPNKDDKPILNDDDDDDDADTNDDGIGRKDDSWIPDEYKGDNDRDESDGGWAFRRLRKR. Acidic residues predominate over residues 550 to 562; the sequence is NDDDDDDDADTND. Residues 564-581 show a composition bias toward basic and acidic residues; that stretch reads GIGRKDDSWIPDEYKGDN.

It belongs to the peptidase M14 family. The cofactor is Zn(2+).

It localises to the vacuole. Its subcellular location is the secreted. Inactive carboxypeptidase that may play a role in cell wall organization and biogenesis. This is Inactive metallocarboxypeptidase ECM14 (ECM14) from Ajellomyces capsulatus (strain H143) (Darling's disease fungus).